The primary structure comprises 262 residues: Hydroxyethylthiazole kinase (262 aa).

M44 is a binding site for substrate. Residues R118 and T166 each contribute to the ATP site. G193 lines the substrate pocket.

The protein belongs to the Thz kinase family. Requires Mg(2+) as cofactor.

It catalyses the reaction 5-(2-hydroxyethyl)-4-methylthiazole + ATP = 4-methyl-5-(2-phosphooxyethyl)-thiazole + ADP + H(+). It functions in the pathway cofactor biosynthesis; thiamine diphosphate biosynthesis; 4-methyl-5-(2-phosphoethyl)-thiazole from 5-(2-hydroxyethyl)-4-methylthiazole: step 1/1. Its function is as follows. Catalyzes the phosphorylation of the hydroxyl group of 4-methyl-5-beta-hydroxyethylthiazole (THZ). The polypeptide is Hydroxyethylthiazole kinase (Chlamydia caviae (strain ATCC VR-813 / DSM 19441 / 03DC25 / GPIC) (Chlamydophila caviae)).